A 185-amino-acid polypeptide reads, in one-letter code: uncharacterized protein (185 aa).

The transit peptide at 1–56 directs the protein to the chloroplast; sequence MSSFTIPSPSSFSLSNSYNQTSPHSFTLRNSRSNFEFHRLRLDVESRRRSTSLRSN. The disordered stretch occupies residues 48–67; the sequence is RRSTSLRSNCSTKGTDSGEN. Positions 52 to 64 are enriched in polar residues; that stretch reads SLRSNCSTKGTDS. Positions 105 to 138 form a coiled coil; the sequence is QAEQQKQVQEIQEEVLERAKKAKERAARETMEEQ.

It localises to the plastid. Its subcellular location is the chloroplast. The protein localises to the plastoglobule. This is an uncharacterized protein from Arabidopsis thaliana (Mouse-ear cress).